The chain runs to 1412 residues: DNA-directed RNA polymerase subunit beta' (1412 aa).

Residues C71, C73, C86, and C89 each coordinate Zn(2+). Mg(2+) is bound by residues D461, D463, and D465. Residues C815, C889, C896, and C899 each contribute to the Zn(2+) site.

It belongs to the RNA polymerase beta' chain family. The RNAP catalytic core consists of 2 alpha, 1 beta, 1 beta' and 1 omega subunit. When a sigma factor is associated with the core the holoenzyme is formed, which can initiate transcription. It depends on Mg(2+) as a cofactor. Zn(2+) is required as a cofactor.

It catalyses the reaction RNA(n) + a ribonucleoside 5'-triphosphate = RNA(n+1) + diphosphate. Its function is as follows. DNA-dependent RNA polymerase catalyzes the transcription of DNA into RNA using the four ribonucleoside triphosphates as substrates. The chain is DNA-directed RNA polymerase subunit beta' from Actinobacillus pleuropneumoniae serotype 5b (strain L20).